The sequence spans 725 residues: MASRTKGTTTIEVGADGVAVITLINPPVNSLSFDVLYSLKSNYEEALSRNDVKAIVVTGAKGKFSGGFDISGFGEIQKGTMKEPKVGYISIDILTDLLEAAKKPSVAAIDGLALGGGLELSMACHARISAPGAQLGLPELQLGVIPGFGGTQRLPRLVGLTKALEMILTSKPVKAEEGHSLGLIDAVVPPAELLNAARRWALDIAERRKPWVSSVLKTDKLPPLGEAREILKFAKDQTRRQAPNMKHPLMCLEAVEVGIVSGSRAGLEKEAQVGSEVINLDTTKGLIHVFFSQRGTTKVPGVTDRGLVPRKINKVAIIGGGLMGSGIATALILSNYSVILKEVNEKFLEAGIGRVKANLQSRVKKGKMSKEKFEKTMSLLKGSLDYESFRDVDMVIEAVIENISLKQQIFADLEKYCPQHCILASNTSTIDLNKIGERTKSQDRIIGAHFFSPAHVMPLLEIVRTNHTSAQVIVDLLDVGKKIRKTPVVVGNCTGFAVNRMFFPYTQAAMFLVEHGTDPYLIDKAVSKFGMPMGPFRLCDLVGFGVAIATATQFIENFPERTYKSMIIPLMQEDKRAGEATRKGFYLYDDRRKAKPDPEIKNYIDKARSVSGAKPDPKLEKLSEKEIIEMTFFPVVNEACRVFAEGIAVKAADLDIAGIFGMGFPPYRGGIMFWADSIGSKYIYSKLEEWSKAYGEFFKPCAFLAERGSKGAPLSAPLEQSRSRL.

The active-site Nucleophile is glutamate 119. Residue glutamate 139 is the Proton acceptor of the active site. Residues serine 723 to leucine 725 carry the Microbody targeting signal motif.

It in the N-terminal section; belongs to the enoyl-CoA hydratase/isomerase family. In the central section; belongs to the 3-hydroxyacyl-CoA dehydrogenase family.

It is found in the glyoxysome. The catalysed reaction is a (3S)-3-hydroxyacyl-CoA = a (2E)-enoyl-CoA + H2O. It catalyses the reaction a 4-saturated-(3S)-3-hydroxyacyl-CoA = a (3E)-enoyl-CoA + H2O. It carries out the reaction a (3Z)-enoyl-CoA = a 4-saturated (2E)-enoyl-CoA. The enzyme catalyses a (3E)-enoyl-CoA = a 4-saturated (2E)-enoyl-CoA. The catalysed reaction is (3S)-3-hydroxybutanoyl-CoA = (3R)-3-hydroxybutanoyl-CoA. It catalyses the reaction a (3S)-3-hydroxyacyl-CoA + NAD(+) = a 3-oxoacyl-CoA + NADH + H(+). It functions in the pathway lipid metabolism; fatty acid beta-oxidation. The protein is Glyoxysomal fatty acid beta-oxidation multifunctional protein MFP-a of Brassica napus (Rape).